Reading from the N-terminus, the 118-residue chain is Holo-[acyl-carrier-protein] synthase (118 aa).

Mg(2+) contacts are provided by Asp-8 and Glu-58.

It belongs to the P-Pant transferase superfamily. AcpS family. The cofactor is Mg(2+).

It localises to the cytoplasm. It catalyses the reaction apo-[ACP] + CoA = holo-[ACP] + adenosine 3',5'-bisphosphate + H(+). In terms of biological role, transfers the 4'-phosphopantetheine moiety from coenzyme A to a Ser of acyl-carrier-protein. The protein is Holo-[acyl-carrier-protein] synthase of Listeria innocua serovar 6a (strain ATCC BAA-680 / CLIP 11262).